The sequence spans 430 residues: Gamma-glutamyl phosphate reductase (430 aa).

The protein belongs to the gamma-glutamyl phosphate reductase family.

The protein resides in the cytoplasm. It carries out the reaction L-glutamate 5-semialdehyde + phosphate + NADP(+) = L-glutamyl 5-phosphate + NADPH + H(+). Its pathway is amino-acid biosynthesis; L-proline biosynthesis; L-glutamate 5-semialdehyde from L-glutamate: step 2/2. Its function is as follows. Catalyzes the NADPH-dependent reduction of L-glutamate 5-phosphate into L-glutamate 5-semialdehyde and phosphate. The product spontaneously undergoes cyclization to form 1-pyrroline-5-carboxylate. This chain is Gamma-glutamyl phosphate reductase, found in Rhodopseudomonas palustris (strain BisA53).